A 317-amino-acid polypeptide reads, in one-letter code: Ferrochelatase (317 aa).

2 residues coordinate Fe cation: His192 and Glu271.

Belongs to the ferrochelatase family.

It is found in the cytoplasm. It catalyses the reaction heme b + 2 H(+) = protoporphyrin IX + Fe(2+). The protein operates within porphyrin-containing compound metabolism; protoheme biosynthesis; protoheme from protoporphyrin-IX: step 1/1. Functionally, catalyzes the ferrous insertion into protoporphyrin IX. The protein is Ferrochelatase of Geobacter sp. (strain M21).